The chain runs to 128 residues: uncharacterized protein (128 aa).

The protein localises to the mitochondrion. This is an uncharacterized protein from Schizosaccharomyces pombe (strain 972 / ATCC 24843) (Fission yeast).